The chain runs to 840 residues: DNA mismatch repair protein MutS (840 aa).

601–608 (GPNMSGKS) provides a ligand contact to ATP.

It belongs to the DNA mismatch repair MutS family.

This protein is involved in the repair of mismatches in DNA. It is possible that it carries out the mismatch recognition step. This protein has a weak ATPase activity. The sequence is that of DNA mismatch repair protein MutS from Lactococcus lactis subsp. cremoris (strain MG1363).